A 421-amino-acid polypeptide reads, in one-letter code: Gamma-glutamyl phosphate reductase (421 aa).

This sequence belongs to the gamma-glutamyl phosphate reductase family.

The protein resides in the cytoplasm. The enzyme catalyses L-glutamate 5-semialdehyde + phosphate + NADP(+) = L-glutamyl 5-phosphate + NADPH + H(+). It participates in amino-acid biosynthesis; L-proline biosynthesis; L-glutamate 5-semialdehyde from L-glutamate: step 2/2. Catalyzes the NADPH-dependent reduction of L-glutamate 5-phosphate into L-glutamate 5-semialdehyde and phosphate. The product spontaneously undergoes cyclization to form 1-pyrroline-5-carboxylate. In Brucella abortus (strain 2308), this protein is Gamma-glutamyl phosphate reductase.